The chain runs to 864 residues: Leucine--tRNA ligase (864 aa).

The short motif at 42–52 (PYPSGKLHMGH) is the 'HIGH' region element. The 'KMSKS' region motif lies at 622 to 626 (KMSKS). Lys-625 contacts ATP.

The protein belongs to the class-I aminoacyl-tRNA synthetase family.

It is found in the cytoplasm. The catalysed reaction is tRNA(Leu) + L-leucine + ATP = L-leucyl-tRNA(Leu) + AMP + diphosphate. This Cellvibrio japonicus (strain Ueda107) (Pseudomonas fluorescens subsp. cellulosa) protein is Leucine--tRNA ligase.